The following is a 142-amino-acid chain: Large ribosomal subunit protein uL11 (142 aa).

It belongs to the universal ribosomal protein uL11 family. In terms of assembly, part of the ribosomal stalk of the 50S ribosomal subunit. Interacts with L10 and the large rRNA to form the base of the stalk. L10 forms an elongated spine to which L12 dimers bind in a sequential fashion forming a multimeric L10(L12)X complex. In terms of processing, one or more lysine residues are methylated.

Functionally, forms part of the ribosomal stalk which helps the ribosome interact with GTP-bound translation factors. The chain is Large ribosomal subunit protein uL11 from Dichelobacter nodosus (strain VCS1703A).